Reading from the N-terminus, the 811-residue chain is DEP domain-containing protein 1A (811 aa).

The 85-residue stretch at 24–108 folds into the DEP domain; sequence FRAGMPLRKH…DNNQLFRFPA (85 aa). Residues 281–321 form the Rho-GAP domain; that stretch reads DYFLDLPEPLLTFEYYELFVNILVVCGYITVSDRSSGIHKI. S512 bears the Phosphoserine mark. The interval 598–653 is interaction with ZNF224; it reads AIDALQLCCLLLPPPNRRKLQLLMRMISRMSQNVDMPKLHDAMGTRSLMIHTFSRC.

As to quaternary structure, isoform 2 and isoform 5 can form homodimers and heterodimers. Interacts with ZNF224. In terms of tissue distribution, expressed in testis. Up-regulated in bladder cancer cells (at protein level).

It localises to the nucleus. Functionally, may be involved in transcriptional regulation as a transcriptional corepressor. The DEPDC1A-ZNF224 complex may play a critical role in bladder carcinogenesis by repressing the transcription of the A20 gene, leading to transport of NF-KB protein into the nucleus, resulting in suppression of apoptosis of bladder cancer cells. The polypeptide is DEP domain-containing protein 1A (DEPDC1) (Homo sapiens (Human)).